A 162-amino-acid chain; its full sequence is 2-C-methyl-D-erythritol 2,4-cyclodiphosphate synthase (162 aa).

Positions 9 and 11 each coordinate a divalent metal cation. 4-CDP-2-C-methyl-D-erythritol 2-phosphate-binding positions include 9 to 11 (DVH) and 35 to 36 (HS). Residue histidine 43 participates in a divalent metal cation binding. Residues 57 to 59 (DIG), 62 to 66 (FPDTD), 133 to 136 (TTTE), phenylalanine 140, and arginine 143 contribute to the 4-CDP-2-C-methyl-D-erythritol 2-phosphate site.

The protein belongs to the IspF family. Homotrimer. A divalent metal cation is required as a cofactor.

It catalyses the reaction 4-CDP-2-C-methyl-D-erythritol 2-phosphate = 2-C-methyl-D-erythritol 2,4-cyclic diphosphate + CMP. The protein operates within isoprenoid biosynthesis; isopentenyl diphosphate biosynthesis via DXP pathway; isopentenyl diphosphate from 1-deoxy-D-xylulose 5-phosphate: step 4/6. Its function is as follows. Involved in the biosynthesis of isopentenyl diphosphate (IPP) and dimethylallyl diphosphate (DMAPP), two major building blocks of isoprenoid compounds. Catalyzes the conversion of 4-diphosphocytidyl-2-C-methyl-D-erythritol 2-phosphate (CDP-ME2P) to 2-C-methyl-D-erythritol 2,4-cyclodiphosphate (ME-CPP) with a corresponding release of cytidine 5-monophosphate (CMP). The sequence is that of 2-C-methyl-D-erythritol 2,4-cyclodiphosphate synthase from Histophilus somni (strain 2336) (Haemophilus somnus).